The chain runs to 181 residues: Regulator of G-protein signaling 10 (181 aa).

A disordered region spans residues 1-35 (MFTRAVSRLSRKRPPSDIHDGDGSSSSGHQSLKST). Residues Ser24 and Ser41 each carry the phosphoserine modification. The RGS domain maps to 41–156 (SLENLLEDPE…LKSDLFLKHR (116 aa)). The S-palmitoyl cysteine moiety is linked to residue Cys74. A disordered region spans residues 157-181 (RTEEEEEDPPDAQTAAKRASRIYNT). Ser176 bears the Phosphoserine mark.

Interacts with GNAZ, GNAI1 and GNAI3. Associates specifically with the activated, GTP-bound forms of GNAZ and GNAI3.

It is found in the cytoplasm. It localises to the cytosol. The protein localises to the nucleus. In terms of biological role, regulates G protein-coupled receptor signaling cascades, including signaling downstream of the muscarinic acetylcholine receptor CHRM2. Inhibits signal transduction by increasing the GTPase activity of G protein alpha subunits, thereby driving them into their inactive GDP-bound form. Modulates the activity of potassium channels that are activated in response to CHRM2 signaling. Activity on GNAZ is inhibited by palmitoylation of the G-protein. This is Regulator of G-protein signaling 10 (Rgs10) from Rattus norvegicus (Rat).